Here is a 183-residue protein sequence, read N- to C-terminus: Holliday junction branch migration complex subunit RuvA (183 aa).

The interval 1-63 (MTVGLIGVVE…EDAHLLYGFL (63 aa)) is domain I. The interval 64–141 (EESEKILFER…IQDETKPVHN (78 aa)) is domain II. Residue N141 is a region of interest, flexible linker. Positions 141–183 (NEAFLALESLGFKSAEINPILKKLKPNLSVEEAIKEALQQLRS) are domain III.

It belongs to the RuvA family. Homotetramer. Forms an RuvA(8)-RuvB(12)-Holliday junction (HJ) complex. HJ DNA is sandwiched between 2 RuvA tetramers; dsDNA enters through RuvA and exits via RuvB. An RuvB hexamer assembles on each DNA strand where it exits the tetramer. Each RuvB hexamer is contacted by two RuvA subunits (via domain III) on 2 adjacent RuvB subunits; this complex drives branch migration. In the full resolvosome a probable DNA-RuvA(4)-RuvB(12)-RuvC(2) complex forms which resolves the HJ.

The protein localises to the cytoplasm. Functionally, the RuvA-RuvB-RuvC complex processes Holliday junction (HJ) DNA during genetic recombination and DNA repair, while the RuvA-RuvB complex plays an important role in the rescue of blocked DNA replication forks via replication fork reversal (RFR). RuvA specifically binds to HJ cruciform DNA, conferring on it an open structure. The RuvB hexamer acts as an ATP-dependent pump, pulling dsDNA into and through the RuvAB complex. HJ branch migration allows RuvC to scan DNA until it finds its consensus sequence, where it cleaves and resolves the cruciform DNA. This is Holliday junction branch migration complex subunit RuvA from Helicobacter acinonychis (strain Sheeba).